Here is a 541-residue protein sequence, read N- to C-terminus: Carboxypeptidase Y homolog A (541 aa).

Residues 1–17 form the signal peptide; that stretch reads MKTFTAALLVGTALAAV. A propeptide spanning residues 18–122 is cleaved from the precursor; that stretch reads PQQQPLQTQV…KLENYDLRVK (105 aa). Disulfide bonds link cysteine 177–cysteine 416, cysteine 311–cysteine 325, cysteine 335–cysteine 358, cysteine 342–cysteine 351, and cysteine 380–cysteine 386. Asparagine 208 carries N-linked (GlcNAc...) asparagine glycosylation. Serine 264 is a catalytic residue. Aspartate 455 is a catalytic residue. N-linked (GlcNAc...) asparagine glycosylation is found at asparagine 485, asparagine 491, and asparagine 506. Histidine 517 is a catalytic residue.

The protein belongs to the peptidase S10 family.

The protein resides in the vacuole. It carries out the reaction Release of a C-terminal amino acid with broad specificity.. Functionally, vacuolar carboxypeptidase involved in degradation of small peptides. Digests preferentially peptides containing an aliphatic or hydrophobic residue in P1' position, as well as methionine, leucine or phenylalanine in P1 position of ester substrate. This Uncinocarpus reesii (strain UAMH 1704) protein is Carboxypeptidase Y homolog A (cpyA).